A 1322-amino-acid chain; its full sequence is MAWMTYISNWFEQDDWYEGLQRANMSQVRQVGLLAAGCQPWNKDVCAASGDRFAYCATLAIYIYQLDHRYNEFKLHAIMSEHKKTITAISWCPHNPDLFASGSTDNLVIIWNVAEQKVIAKLDSTKGIPASLSWCWNAEDVVAFVSHRGPLFIWTISGPDSGVIVHKDAHSFLSDICMFRWHTHQKGKVVFGHIDGSLSIFHPGNKNQKHVLRPESLEGTDEEDPVTALEWDPLSTDYLLVVNLHYGIRLVDSESLSCITTFNLPSAAASVQCLAWVPSAPGMFITGDSQVGVLRIWNVSRTTPIDNLKLKKTGFHCLHVLNSPPRKKFSVQSPTKNHYTSSTSEAVPPPTLTQNQAFSLPPGHAVCCFLDGGVGLYDMGAKKWDFLRDLGHVETIFDCKFKPDDPNLLATASFDGTIKVWDINTLTAVYTSPGNEGVIYSLSWAPGGLNCIAGGTSRNGAFIWNVQKGKIIQRFNEHGTNGIFCIAWSHKDSKRIATCSSDGFCIIRTIDGKVLHKYKHPAAVFGCDWSQNNKDMIATGCEDTNVRVYYVATSSDQPLKVFSGHTAKVFHVKWSPLREGILCSGSDDGTVRIWDYTQDACINILNGHTAPVRGLMWNTEIPYLLISGSWDYTIKVWDTREGTCVDTVYDHGADVYGLTCHPSRPFTMASCSRDSTVRLWSLTALVTPVQINILADRSWEEIIGNTDYAIEPGTPPLLCGKVSRDIRQEIEKLTANSQVKKLRWFSECLSPPGGSDNLWNLVAVIKGQDDSLLPQNYCKGIMHLKHLIKFRTSEAQELTTVKMSKFGGGIGVPAKEERLKEAAEIHLRLGQIQRYCELMVELGEWDKALSIAPGVSVKYWKKLMQRRADQLIQEDKDDVIPYCIAIGDVKKLVHFFMSRGQLKEALLVAQAACEGNMQPLHVSVPKGASYSDDIYKEDFNELLHKVSKELAEWYFQDGRAVLAACCHLAIDNIELAMAYLIRGNELELAVCVGTVLGESAAPATHYALELLARKCMMISVCFPCVGYSVPFCYVNRNLAADLLLMIPDNELHLIKLCAFYPGCTEEINDLHDKCKLPTVEECMQLAETARADDNIFETVKYYLLSQEPEKALPIGISFVKEYISSSDWTLDTIYPVLDLLSYIRTEKLLLHTCTEARNELLILCGYIGALLAIRRQYQSIVPALYEYTSQLLKRREVSVPLKIEYLSEELDAWRACTQSTNRSLEDSPYTPPSDSQRMIYATLLKRLKEESLKGIIGPDYVTGSNLPSHSDIHISCLTGLKIQGPVFFLEDGKSAISLNDALMWAKVNPFSPLGTGIRLNPF.

5 WD repeats span residues 81-121, 123-164, 171-211, 221-261, and 266-307; these read EHKK…VIAK, DSTK…SGVI, SFLS…QKHV, DEED…CITT, and SAAA…PIDN. Residues 328–352 are disordered; it reads KFSVQSPTKNHYTSSTSEAVPPPTL. Residues 330–345 are compositionally biased toward polar residues; that stretch reads SVQSPTKNHYTSSTSE. 7 WD repeats span residues 391–431, 434–474, 478–518, 519–559, 564–604, 607–647, and 650–690; these read GHVE…AVYT, GNEG…IIQR, HGTN…LHKY, KHPA…DQPL, GHTA…CINI, GHTA…CVDT, and DHGA…TPVQ.

This chain is WD repeat-containing protein 17 (WDR17), found in Homo sapiens (Human).